Consider the following 107-residue polypeptide: U1-lycotoxin-Ls1b (107 aa).

Positions 1-20 (MMKVLVVFALLVTLISYSSS) are cleaved as a signal peptide. The propeptide occupies 21 to 41 (EGIDDLEADELLSLMANEQTR). Intrachain disulfides connect C44–C59, C51–C68, C58–C86, and C70–C84.

This sequence belongs to the neurotoxin 19 (CSTX) family. 04 (U1-Lctx) subfamily. In terms of tissue distribution, expressed by the venom gland.

The protein resides in the secreted. The chain is U1-lycotoxin-Ls1b from Lycosa singoriensis (Wolf spider).